A 323-amino-acid polypeptide reads, in one-letter code: Tumor-associated calcium signal transducer 2 (323 aa).

An N-terminal signal peptide occupies residues 1–26 (MARGPGLAPPPLRLPLLLLVLAAVTG). Over 27–274 (HTAAQDNCTC…PPKFSMKRLT (248 aa)) the chain is Extracellular. N33 carries N-linked (GlcNAc...) asparagine glycosylation. In terms of domain architecture, Thyroglobulin type-1 spans 70-145 (TSKCLLLKAR…TDKGDLSLRC (76 aa)). Disulfide bonds link C73–C108, C119–C125, and C127–C145. N120 is a glycosylation site (N-linked (GlcNAc...) asparagine). N168 and N208 each carry an N-linked (GlcNAc...) asparagine glycan. The helical transmembrane segment at 275–297 (AGLIAVIVVVVVALVAGMAVLVI) threads the bilayer. At 298 to 323 (TNRRKSGKYKKVEIKELGELRKEPSL) the chain is on the cytoplasmic side.

This sequence belongs to the EPCAM family. Post-translationally, the N-terminus is blocked. As to expression, placenta, pancreatic carcinoma cell lines.

Its subcellular location is the membrane. Functionally, may function as a growth factor receptor. The protein is Tumor-associated calcium signal transducer 2 (TACSTD2) of Homo sapiens (Human).